A 185-amino-acid polypeptide reads, in one-letter code: UPF0149 protein PFL_5969 (185 aa).

Belongs to the UPF0149 family.

In Pseudomonas fluorescens (strain ATCC BAA-477 / NRRL B-23932 / Pf-5), this protein is UPF0149 protein PFL_5969.